Reading from the N-terminus, the 234-residue chain is Triosephosphate isomerase (234 aa).

8–10 is a binding site for substrate; it reads NFK. Histidine 90 functions as the Electrophile in the catalytic mechanism. Residue glutamate 159 is the Proton acceptor of the active site. Positions 165 and 197 each coordinate substrate.

Belongs to the triosephosphate isomerase family. Homodimer.

The protein localises to the cytoplasm. It catalyses the reaction D-glyceraldehyde 3-phosphate = dihydroxyacetone phosphate. Its pathway is carbohydrate biosynthesis; gluconeogenesis. It participates in carbohydrate degradation; glycolysis; D-glyceraldehyde 3-phosphate from glycerone phosphate: step 1/1. In terms of biological role, involved in the gluconeogenesis. Catalyzes stereospecifically the conversion of dihydroxyacetone phosphate (DHAP) to D-glyceraldehyde-3-phosphate (G3P). This Helicobacter pylori (strain P12) protein is Triosephosphate isomerase.